A 458-amino-acid chain; its full sequence is UDP-N-acetylglucosamine 1-carboxyvinyltransferase (458 aa).

22–23 is a binding site for phosphoenolpyruvate; sequence KN. Arg94 lines the UDP-N-acetyl-alpha-D-glucosamine pocket. Catalysis depends on Asp119, which acts as the Proton donor. UDP-N-acetyl-alpha-D-glucosamine-binding residues include Asp309 and Val331.

It belongs to the EPSP synthase family. MurA subfamily.

It localises to the cytoplasm. The catalysed reaction is phosphoenolpyruvate + UDP-N-acetyl-alpha-D-glucosamine = UDP-N-acetyl-3-O-(1-carboxyvinyl)-alpha-D-glucosamine + phosphate. It participates in cell wall biogenesis; peptidoglycan biosynthesis. Cell wall formation. Adds enolpyruvyl to UDP-N-acetylglucosamine. This Chlamydia pneumoniae (Chlamydophila pneumoniae) protein is UDP-N-acetylglucosamine 1-carboxyvinyltransferase.